A 160-amino-acid polypeptide reads, in one-letter code: Crossover junction endodeoxyribonuclease RuvC (160 aa).

Active-site residues include Asp7, Glu73, and Asp145. Mg(2+) is bound by residues Asp7, Glu73, and Asp145.

Belongs to the RuvC family. Homodimer which binds Holliday junction (HJ) DNA. The HJ becomes 2-fold symmetrical on binding to RuvC with unstacked arms; it has a different conformation from HJ DNA in complex with RuvA. In the full resolvosome a probable DNA-RuvA(4)-RuvB(12)-RuvC(2) complex forms which resolves the HJ. The cofactor is Mg(2+).

The protein localises to the cytoplasm. It catalyses the reaction Endonucleolytic cleavage at a junction such as a reciprocal single-stranded crossover between two homologous DNA duplexes (Holliday junction).. The RuvA-RuvB-RuvC complex processes Holliday junction (HJ) DNA during genetic recombination and DNA repair. Endonuclease that resolves HJ intermediates. Cleaves cruciform DNA by making single-stranded nicks across the HJ at symmetrical positions within the homologous arms, yielding a 5'-phosphate and a 3'-hydroxyl group; requires a central core of homology in the junction. The consensus cleavage sequence is 5'-(A/T)TT(C/G)-3'. Cleavage occurs on the 3'-side of the TT dinucleotide at the point of strand exchange. HJ branch migration catalyzed by RuvA-RuvB allows RuvC to scan DNA until it finds its consensus sequence, where it cleaves and resolves the cruciform DNA. This is Crossover junction endodeoxyribonuclease RuvC from Synechococcus sp. (strain CC9311).